A 382-amino-acid polypeptide reads, in one-letter code: MAVLGSWTAQRCLWENGGRSLLRAVAQSGPCCSHQAKRYLLTDDILKLHEFQKKKLATLYQIYGKKDLYFQMIEDKLQRNGIILRDELKTLLHLCSTQPDVEFAKRVIYRYHAENKNVMFGEFRFGPVFLRLCYELDLEDIALDLLKDQTLRGFFSDCTSFNILMDMLFTKGQYERAVEVLVEMRNQRVRFSKDTYILAFAVCYKLNNPNSCKICTTLLEEIEMTGDLLPKQAACFAAAFALKQNEFQRARTIYSKIMNTDTKLCNNLLLLIKVHTSTMEDVLHFLEAATGTTGSILVKKLEFSEEVLASAGQKLKSQAELHTRFNSVYQRLKNEGQISALTLDQMLCYTSPELRHTNAHLLRNRKISHRTFRSLQSTLLVE.

The PPR repeat unit spans residues 159-193; the sequence is TSFNILMDMLFTKGQYERAVEVLVEMRNQRVRFSK.

This sequence belongs to the PTCD2 family.

The protein resides in the mitochondrion. May be involved in mitochondrial RNA maturation and mitochondrial respiratory chain function. This Xenopus laevis (African clawed frog) protein is Pentatricopeptide repeat-containing protein 2, mitochondrial (ptcd2).